Consider the following 273-residue polypeptide: Ribosomal RNA small subunit methyltransferase A (273 aa).

6 residues coordinate S-adenosyl-L-methionine: Asn-18, Leu-20, Gly-45, Glu-66, Asp-91, and Asn-113.

It belongs to the class I-like SAM-binding methyltransferase superfamily. rRNA adenine N(6)-methyltransferase family. RsmA subfamily.

It localises to the cytoplasm. The catalysed reaction is adenosine(1518)/adenosine(1519) in 16S rRNA + 4 S-adenosyl-L-methionine = N(6)-dimethyladenosine(1518)/N(6)-dimethyladenosine(1519) in 16S rRNA + 4 S-adenosyl-L-homocysteine + 4 H(+). In terms of biological role, specifically dimethylates two adjacent adenosines (A1518 and A1519) in the loop of a conserved hairpin near the 3'-end of 16S rRNA in the 30S particle. May play a critical role in biogenesis of 30S subunits. This Escherichia coli (strain SE11) protein is Ribosomal RNA small subunit methyltransferase A.